The chain runs to 172 residues: Dual-action ribosomal maturation protein DarP (172 aa).

Belongs to the DarP family.

It localises to the cytoplasm. Its function is as follows. Member of a network of 50S ribosomal subunit biogenesis factors which assembles along the 30S-50S interface, preventing incorrect 23S rRNA structures from forming. Promotes peptidyl transferase center (PTC) maturation. This Azotobacter vinelandii (strain DJ / ATCC BAA-1303) protein is Dual-action ribosomal maturation protein DarP.